The following is a 451-amino-acid chain: Cyclin-dependent kinase 14 (451 aa).

Phosphoserine occurs at positions 60 and 77. Residues 84 to 114 (NFKTSSTGKESPKVRRHSSPSSPTSPKFGKA) are disordered. Residue S116 is modified to Phosphoserine. The 285-residue stretch at 117–401 (YEKLEKLGEG…AQAALSHEYF (285 aa)) folds into the Protein kinase domain. ATP-binding positions include 123–131 (LGEGSYATV) and K146. The active-site Proton acceptor is the D238.

Belongs to the protein kinase superfamily. CMGC Ser/Thr protein kinase family. CDC2/CDKX subfamily. Found in a complex with LRP6, CCNY and CAPRIN2 during G2/M stage; CAPRIN2 functions as a scaffold for the complex by binding to CCNY via its N terminus and to CDK14 via its C terminus. Interacts with CCNY; CCNY mediates its recruitment to the plasma membrane and promotes phosphorylation of LRP6. Interacts with CCDN3 and CDKN1A. Interacts with SEPT8. Interacts with 14-3-3 proteina YWHAB, YWHAE, YWHAH and YWHAQ.

It localises to the cell membrane. The protein localises to the cytoplasm. It is found in the nucleus. It carries out the reaction L-seryl-[protein] + ATP = O-phospho-L-seryl-[protein] + ADP + H(+). The enzyme catalyses L-threonyl-[protein] + ATP = O-phospho-L-threonyl-[protein] + ADP + H(+). Serine/threonine-protein kinase activity is promoted by associated cyclins CCDN3 and CCNY and repressed by CDKN1A. Serine/threonine-protein kinase involved in the control of the eukaryotic cell cycle, whose activity is controlled by an associated cyclin. Acts as a cell-cycle regulator of Wnt signaling pathway during G2/M phase by mediating the phosphorylation of LRP6 at 'Ser-1490', leading to the activation of the Wnt signaling pathway. Acts as a regulator of cell cycle progression and cell proliferation via its interaction with CCDN3. Phosphorylates RB1 in vitro, however the relevance of such result remains to be confirmed in vivo. May also play a role in meiosis, neuron differentiation and may indirectly act as a negative regulator of insulin-responsive glucose transport. This chain is Cyclin-dependent kinase 14 (CDK14), found in Plecturocebus moloch (Dusky titi monkey).